The chain runs to 1018 residues: Contactin-1 (1018 aa).

The N-terminal stretch at 1 to 20 is a signal peptide; that stretch reads MKMWLLFSLLVIISFKTCLS. 6 consecutive Ig-like C2-type domains span residues 41–131, 137–223, 241–326, 331–407, 413–500, and 504–601; these read PIFE…ATLS, PFPP…KSVF, PADI…ARIY, PEWV…AELK, PTFE…GTLV, and PTRI…LVVR. Cystine bridges form between Cys-65–Cys-114 and Cys-158–Cys-211. 2 N-linked (GlcNAc...) asparagine glycosylation sites follow: Asn-208 and Asn-258. A disulfide bond links Cys-263 and Cys-310. A glycan (N-linked (GlcNAc...) asparagine) is linked at Asn-338. 2 disulfides stabilise this stretch: Cys-352–Cys-391 and Cys-436–Cys-484. 4 N-linked (GlcNAc...) asparagine glycosylation sites follow: Asn-457, Asn-473, Asn-494, and Asn-521. An intrachain disulfide couples Cys-526 to Cys-583. Asn-591 is a glycosylation site (N-linked (GlcNAc...) asparagine). 4 consecutive Fibronectin type-III domains span residues 606 to 704, 709 to 806, 811 to 906, and 907 to 1000; these read PPGG…TDGA, APSD…SAQD, APTA…APPS, and QPPR…ILSP. Disordered stretches follow at residues 698–718 and 891–910; these read KIKT…GGGG and PPSD…QPPR. Ser-999 carries the GPI-anchor amidated serine lipid modification. A propeptide spans 1000-1018 (removed in mature form); the sequence is PCLLGFLLPALGILVYLEF.

Belongs to the immunoglobulin superfamily. Contactin family. As to quaternary structure, monomer. Interacts with CNTNAP1 in cis form. Binds to the carbonic-anhydrase like domain of PTPRZ1. Interacts with NOTCH1 and TNR. Detected in a complex with NRCAM and PTPRB. Interacts with TASOR.

It localises to the cell membrane. Contactins mediate cell surface interactions during nervous system development. Involved in the formation of paranodal axo-glial junctions in myelinated peripheral nerves and in the signaling between axons and myelinating glial cells via its association with CNTNAP1. Participates in oligodendrocytes generation by acting as a ligand of NOTCH1. Its association with NOTCH1 promotes NOTCH1 activation through the released notch intracellular domain (NICD) and subsequent translocation to the nucleus. Interaction with TNR induces a repulsion of neurons and an inhibition of neurite outgrowth. In Bos taurus (Bovine), this protein is Contactin-1 (CNTN1).